We begin with the raw amino-acid sequence, 462 residues long: Elongation factor 1-alpha (462 aa).

Blocked amino end (Gly) is present on G2. The 238-residue stretch at 5 to 242 (KIHINIVVIG…DAILPPSRPT (238 aa)) folds into the tr-type G domain. The interval 14 to 21 (GHVDSGKS) is G1. Residue 14 to 21 (GHVDSGKS) participates in GTP binding. N6,N6,N6-trimethyllysine is present on K36. K55 is modified (N6-methyllysine). Residues 70–74 (GITID) form a G2 region. At K79 the chain carries N6,N6,N6-trimethyllysine. Residues 91–94 (DAPG) are G3. GTP contacts are provided by residues 91 to 95 (DAPGH) and 153 to 156 (NKMD). Positions 153 to 156 (NKMD) are G4. The G5 stretch occupies residues 194 to 196 (SGW). K219 and K318 each carry N6,N6,N6-trimethyllysine. The residue at position 374 (E374) is a 5-glutamyl glycerylphosphorylethanolamine.

Belongs to the TRAFAC class translation factor GTPase superfamily. Classic translation factor GTPase family. EF-Tu/EF-1A subfamily. Post-translationally, the N-terminus is blocked.

It is found in the cytoplasm. Its function is as follows. This protein promotes the GTP-dependent binding of aminoacyl-tRNA to the A-site of ribosomes during protein biosynthesis. The sequence is that of Elongation factor 1-alpha from Artemia salina (Brine shrimp).